Reading from the N-terminus, the 124-residue chain is Small ribosomal subunit protein uS13 (124 aa).

A disordered region spans residues 97–124 (PVRGQRTKTNARTRKGPKRTIAGKKKAR).

The protein belongs to the universal ribosomal protein uS13 family. Part of the 30S ribosomal subunit. Forms a loose heterodimer with protein S19. Forms two bridges to the 50S subunit in the 70S ribosome.

Functionally, located at the top of the head of the 30S subunit, it contacts several helices of the 16S rRNA. In the 70S ribosome it contacts the 23S rRNA (bridge B1a) and protein L5 of the 50S subunit (bridge B1b), connecting the 2 subunits; these bridges are implicated in subunit movement. Contacts the tRNAs in the A and P-sites. The polypeptide is Small ribosomal subunit protein uS13 (Mycolicibacterium gilvum (strain PYR-GCK) (Mycobacterium gilvum (strain PYR-GCK))).